A 1393-amino-acid polypeptide reads, in one-letter code: DNA-directed RNA polymerase subunit beta'' (1393 aa).

Cys-220, Cys-291, Cys-298, and Cys-301 together coordinate Zn(2+).

This sequence belongs to the RNA polymerase beta' chain family. RpoC2 subfamily. As to quaternary structure, in plastids the minimal PEP RNA polymerase catalytic core is composed of four subunits: alpha, beta, beta', and beta''. When a (nuclear-encoded) sigma factor is associated with the core the holoenzyme is formed, which can initiate transcription. Zn(2+) serves as cofactor.

The protein localises to the plastid. Its subcellular location is the chloroplast. The enzyme catalyses RNA(n) + a ribonucleoside 5'-triphosphate = RNA(n+1) + diphosphate. Its function is as follows. DNA-dependent RNA polymerase catalyzes the transcription of DNA into RNA using the four ribonucleoside triphosphates as substrates. This is DNA-directed RNA polymerase subunit beta'' from Gossypium hirsutum (Upland cotton).